A 188-amino-acid polypeptide reads, in one-letter code: uncharacterized protein (188 aa).

This is an uncharacterized protein from Haemophilus influenzae (strain ATCC 51907 / DSM 11121 / KW20 / Rd).